The following is a 177-amino-acid chain: von Ebner gland protein 2 (177 aa).

A signal peptide spans Met1–Ala18. Residues Cys80 and Cys172 are joined by a disulfide bond.

Belongs to the calycin superfamily. Lipocalin family. In terms of assembly, homodimer.

It is found in the secreted. Its function is as follows. Could play a role in taste reception. Could be necessary for the concentration and delivery of sapid molecules in the gustatory system. The chain is von Ebner gland protein 2 (Vegp2) from Rattus norvegicus (Rat).